We begin with the raw amino-acid sequence, 561 residues long: Glutamate--tRNA ligase (561 aa).

Residues 107-117 carry the 'HIGH' region motif; it reads PNPSGPLHLGH.

It belongs to the class-I aminoacyl-tRNA synthetase family. Glutamate--tRNA ligase type 2 subfamily.

The protein localises to the cytoplasm. The enzyme catalyses tRNA(Glu) + L-glutamate + ATP = L-glutamyl-tRNA(Glu) + AMP + diphosphate. Functionally, catalyzes the attachment of glutamate to tRNA(Glu) in a two-step reaction: glutamate is first activated by ATP to form Glu-AMP and then transferred to the acceptor end of tRNA(Glu). This Methanoculleus marisnigri (strain ATCC 35101 / DSM 1498 / JR1) protein is Glutamate--tRNA ligase.